Reading from the N-terminus, the 1345-residue chain is Rho guanine nucleotide exchange factor 10 (1345 aa).

Disordered regions lie at residues 1–84 (MEQG…PAKL) and 99–120 (TPLQ…GVGL). The segment covering 22 to 39 (NNEEEGELFDFDSGDEVP) has biased composition (acidic residues). The span at 40-54 (EADRQVPSADDRTRG) shows a compositional bias: basic and acidic residues. Positions 102–111 (QEDQPSSPDA) are enriched in polar residues. Serine 157 is subject to Phosphoserine. 2 disordered regions span residues 158–195 (VEEE…SALA) and 207–273 (MENP…IPRS). Residues 171 to 191 (QCNSLSSEDLPHSSEQGSQEG) show a composition bias toward polar residues. Residues 224-239 (DSEPDEMIYDDVENGE) show a composition bias toward acidic residues. Over residues 242–255 (GNSSPEYGWSSSEF) the composition is skewed to low complexity. Residues 307 to 335 (GAMEIQQAKQRQERKMQKLMKAAKEGTKD) adopt a coiled-coil conformation. At serine 355 the chain carries Phosphoserine. Positions 397 to 584 (VRRYILGSIV…ETLAEKLNER (188 aa)) constitute a DH domain. 2 disordered regions span residues 1202 to 1237 (DRAR…QPDT) and 1253 to 1306 (KNDL…RASS). The span at 1256-1271 (LSSSSGSLNLSHGSSS) shows a compositional bias: low complexity. Serine 1262 is subject to Phosphoserine. Glutamine 1314 bears the N5-methylglutamine mark.

Post-translationally, methylated at Gln-1314 by N6AMT1. Ubiquitously expressed.

Its function is as follows. May play a role in developmental myelination of peripheral nerves. The sequence is that of Rho guanine nucleotide exchange factor 10 (Arhgef10) from Mus musculus (Mouse).